The sequence spans 977 residues: Poly [ADP-ribose] polymerase 1 (977 aa).

2 consecutive PARP-type zinc fingers follow at residues 8–91 (WKAE…GSAP) and 104–179 (CTIE…KKDA). Zn(2+) is bound by residues Cys-20, Cys-23, His-52, Cys-55, Cys-116, Cys-119, His-141, and Cys-144. Disordered stretches follow at residues 177–199 (KDAP…QNDI) and 218–237 (DKGK…DLQE). In terms of domain architecture, PADR1 zinc-binding spans 227-365 (DSNANSSDLQ…AKKPERVLPP (139 aa)). One can recognise an SAP domain in the interval 254–288 (KKHVSTAELRNMLEANGQDTSGPERHLLDRCADGM). The zinc ribbon stretch occupies residues 291 to 335 (GALGTCPVCSSFLYYHGGQYHCSGYVSEWSKCTYSTTEPVRSKKK). Zn(2+)-binding residues include Cys-296, Cys-299, Cys-312, and Cys-322. The BRCT domain maps to 381-473 (SFLSEGLDKL…RVLPFDLYKV (93 aa)). The WGR domain maps to 504–604 (TGHILEDGKS…TNFQKQPGKF (101 aa)). A PARP alpha-helical domain is found at 626 to 745 (KSSLPPQLLE…DIEIASKLVG (120 aa)). In terms of domain architecture, PARP catalytic spans 752–977 (ESLDDKYKKL…LLKVRFHHKR (226 aa)).

The protein belongs to the ARTD/PARP family.

The protein localises to the nucleus. The catalysed reaction is NAD(+) + (ADP-D-ribosyl)n-acceptor = nicotinamide + (ADP-D-ribosyl)n+1-acceptor + H(+).. The enzyme catalyses L-aspartyl-[protein] + NAD(+) = 4-O-(ADP-D-ribosyl)-L-aspartyl-[protein] + nicotinamide. It catalyses the reaction L-glutamyl-[protein] + NAD(+) = 5-O-(ADP-D-ribosyl)-L-glutamyl-[protein] + nicotinamide. In terms of biological role, involved in the base excision repair (BER) pathway, by catalyzing the poly(ADP-ribosyl)ation of a limited number of acceptor proteins involved in chromatin architecture and in DNA metabolism. This modification follows DNA damages and appears as an obligatory step in a detection/signaling pathway leading to the reparation of DNA strand breaks. This Oryza sativa subsp. japonica (Rice) protein is Poly [ADP-ribose] polymerase 1 (PARP1).